A 564-amino-acid polypeptide reads, in one-letter code: Dihydropyrimidinase-related protein 5 (564 aa).

A phosphothreonine mark is found at threonine 509 and threonine 514. Phosphoserine is present on residues serine 532 and serine 538. Arginine 559 is subject to Omega-N-methylarginine.

This sequence belongs to the metallo-dependent hydrolases superfamily. Hydantoinase/dihydropyrimidinase family. In terms of assembly, homotetramer, and heterotetramer with other DPYS-like proteins. Interacts with DPYSL2, DPYSL3 and DPYSL4. Interacts with MAP2 and TUBB3.

It is found in the cytoplasm. In terms of biological role, involved in the negative regulation of dendrite outgrowth. This Homo sapiens (Human) protein is Dihydropyrimidinase-related protein 5 (DPYSL5).